A 213-amino-acid polypeptide reads, in one-letter code: Octanoyltransferase (213 aa).

A BPL/LPL catalytic domain is found at 32–207; the sequence is ESTLDEIWLV…NILALLNNPD (176 aa). Substrate is bound by residues 71–78, 138–140, and 151–153; these read RGGQVTYH, SLG, and GLA. Catalysis depends on cysteine 169, which acts as the Acyl-thioester intermediate.

The protein belongs to the LipB family.

The protein resides in the cytoplasm. The enzyme catalyses octanoyl-[ACP] + L-lysyl-[protein] = N(6)-octanoyl-L-lysyl-[protein] + holo-[ACP] + H(+). Its pathway is protein modification; protein lipoylation via endogenous pathway; protein N(6)-(lipoyl)lysine from octanoyl-[acyl-carrier-protein]: step 1/2. Catalyzes the transfer of endogenously produced octanoic acid from octanoyl-acyl-carrier-protein onto the lipoyl domains of lipoate-dependent enzymes. Lipoyl-ACP can also act as a substrate although octanoyl-ACP is likely to be the physiological substrate. The protein is Octanoyltransferase of Escherichia coli (strain SMS-3-5 / SECEC).